Consider the following 426-residue polypeptide: GTPase Obg (426 aa).

Residues 1 to 158 (MFVDQVSVYV…RNIKVELKLI (158 aa)) enclose the Obg domain. 2 disordered regions span residues 66–86 (GKRG…DPLV) and 119–146 (GGRG…GEPG). An OBG-type G domain is found at 159–329 (ADVGLVGFPS…LLFAIADKLE (171 aa)). Residues 165-172 (GFPSVGKS), 190-194 (FTTLS), 212-215 (DLPG), 282-285 (NKMD), and 310-312 (SAL) each bind GTP. Ser-172 and Thr-192 together coordinate Mg(2+). Residues 348 to 426 (RYQKEEDPFH…LLEYEFEFIE (79 aa)) form the OCT domain.

It belongs to the TRAFAC class OBG-HflX-like GTPase superfamily. OBG GTPase family. Monomer. The cofactor is Mg(2+).

The protein localises to the cytoplasm. Its function is as follows. An essential GTPase which binds GTP, GDP and possibly (p)ppGpp with moderate affinity, with high nucleotide exchange rates and a fairly low GTP hydrolysis rate. Plays a role in control of the cell cycle, stress response, ribosome biogenesis and in those bacteria that undergo differentiation, in morphogenesis control. This Oceanobacillus iheyensis (strain DSM 14371 / CIP 107618 / JCM 11309 / KCTC 3954 / HTE831) protein is GTPase Obg.